A 562-amino-acid polypeptide reads, in one-letter code: Gut esterase 1 (562 aa).

The first 16 residues, 1 to 16 (MRIFLVSVILINACWA), serve as a signal peptide directing secretion. The N-linked (GlcNAc...) asparagine; atypical glycan is linked to asparagine 73. Cysteine 75 and cysteine 93 are joined by a disulfide. Residue serine 198 is the Acyl-ester intermediate of the active site. Cysteine 250 and cysteine 258 are oxidised to a cystine. Residues glutamate 319 and histidine 452 each act as charge relay system in the active site. Residues 559–562 (KDEL) carry the Prevents secretion from ER motif.

Belongs to the type-B carboxylesterase/lipase family. In terms of tissue distribution, expressed only in the intestine.

It is found in the endoplasmic reticulum lumen. It carries out the reaction a carboxylic ester + H2O = an alcohol + a carboxylate + H(+). The polypeptide is Gut esterase 1 (ges-1) (Caenorhabditis elegans).